The chain runs to 78 residues: DNA-directed RNA polymerase subunit Rpo5 (78 aa).

It belongs to the archaeal Rpo5/eukaryotic RPB5 RNA polymerase subunit family. As to quaternary structure, part of the RNA polymerase complex.

The protein localises to the cytoplasm. The enzyme catalyses RNA(n) + a ribonucleoside 5'-triphosphate = RNA(n+1) + diphosphate. DNA-dependent RNA polymerase (RNAP) catalyzes the transcription of DNA into RNA using the four ribonucleoside triphosphates as substrates. The sequence is that of DNA-directed RNA polymerase subunit Rpo5 from Methanosarcina barkeri (strain Fusaro / DSM 804).